Consider the following 374-residue polypeptide: MPRPIQAVIHGPALANNLQIARRHAPNSRVWAVVKANAYGHGIERVYEGLRQTDGFGLLDLDEAVRLRQLGWQGPVLLLEGFFKPEDLAIVEQYRLTTTVHCEEQLRMLELARLKGPTSVQLKINTGMSRLGFAPAAYRAAWERARAISGVGTIVHMTHFSDADGPRGIEHQLAAFERATQGLPGEASLSNSAATLWHPKAHRDWVRPGVIMYGASPTGVAADIDGTGLMPAMSLKSELIAIQDLQPGATIGYGSRFTVEHPMRIGVVACGYADGYPRHAPGWDGNHTPVLVDGVRTHIVGRVSMDMITVDLAGVPEARVGTPVTLWGEGLPIDDVAQASGTVGYELMCALAPRVPVLVEPVGTAEAGDLGKAA.

The Proton acceptor; specific for D-alanine role is filled by Lys-35. Lys-35 is modified (N6-(pyridoxal phosphate)lysine). Arg-130 lines the substrate pocket. Tyr-253 (proton acceptor; specific for L-alanine) is an active-site residue. Position 305 (Met-305) interacts with substrate.

Belongs to the alanine racemase family. Pyridoxal 5'-phosphate serves as cofactor.

The enzyme catalyses L-alanine = D-alanine. It functions in the pathway amino-acid biosynthesis; D-alanine biosynthesis; D-alanine from L-alanine: step 1/1. Functionally, catalyzes the interconversion of L-alanine and D-alanine. May also act on other amino acids. This is Alanine racemase (alr) from Ralstonia pickettii (strain 12J).